Consider the following 299-residue polypeptide: ATP phosphoribosyltransferase (299 aa).

Belongs to the ATP phosphoribosyltransferase family. Long subfamily. Equilibrium between an active dimeric form, an inactive hexameric form and higher aggregates. Interconversion between the various forms is largely reversible and is influenced by the natural substrates and inhibitors of the enzyme. Mg(2+) serves as cofactor.

It is found in the cytoplasm. It carries out the reaction 1-(5-phospho-beta-D-ribosyl)-ATP + diphosphate = 5-phospho-alpha-D-ribose 1-diphosphate + ATP. Its pathway is amino-acid biosynthesis; L-histidine biosynthesis; L-histidine from 5-phospho-alpha-D-ribose 1-diphosphate: step 1/9. Its activity is regulated as follows. Feedback inhibited by histidine. In terms of biological role, catalyzes the condensation of ATP and 5-phosphoribose 1-diphosphate to form N'-(5'-phosphoribosyl)-ATP (PR-ATP). Has a crucial role in the pathway because the rate of histidine biosynthesis seems to be controlled primarily by regulation of HisG enzymatic activity. The chain is ATP phosphoribosyltransferase from Klebsiella pneumoniae (strain 342).